The sequence spans 412 residues: DNA polymerase IV (412 aa).

The UmuC domain maps to 12-193; it reads ILHVDMNCFF…LPVGAMHGIG (182 aa). Positions 16 and 112 each coordinate Mg(2+). Residue Glu113 is part of the active site. The interval 235–257 is disordered; the sequence is KGMDDREVDPSQMGQHKSVGNSM. Positions 246 to 257 are enriched in polar residues; it reads QMGQHKSVGNSM.

It belongs to the DNA polymerase type-Y family. In terms of assembly, monomer. The cofactor is Mg(2+).

The protein localises to the cytoplasm. It catalyses the reaction DNA(n) + a 2'-deoxyribonucleoside 5'-triphosphate = DNA(n+1) + diphosphate. In terms of biological role, poorly processive, error-prone DNA polymerase involved in untargeted mutagenesis. Copies undamaged DNA at stalled replication forks, which arise in vivo from mismatched or misaligned primer ends. These misaligned primers can be extended by PolIV. Exhibits no 3'-5' exonuclease (proofreading) activity. May be involved in translesional synthesis, in conjunction with the beta clamp from PolIII. The chain is DNA polymerase IV from Bacillus anthracis.